The chain runs to 156 residues: Endogenous retrovirus group K member 25 Pro protein (156 aa).

The 76-residue stretch at 21–96 (FEGLVDTGAD…IPLNLWGRDL (76 aa)) folds into the Peptidase A2 domain. Residue aspartate 26 is part of the active site. One can recognise a G-patch domain in the interval 111–156 (YSPTSQKIMTKMGYIPGKGLGKNEDGIKIPVEAKINQKREGIGYPF).

This sequence belongs to the peptidase A2 family. HERV class-II K(HML-2) subfamily. As to quaternary structure, active as a homodimer. In terms of processing, autoproteolytically processed at the N-terminus. Expected C-terminal autoprocessing not detected. The sequence shown is that of the processed Pro protein.

The enzyme catalyses Processing at the authentic HIV-1 PR recognition site and release of the mature p17 matrix and the p24 capsid protein, as a result of the cleavage of the -SQNY-|-PIVQ- cleavage site.. In terms of biological role, retroviral proteases have roles in processing of the primary translation products and the maturation of the viral particle. Endogenous Pro proteins may have kept, lost or modified their original function during evolution. This endogenous protein has retained most of the characteristics of retroviral proteases. The chain is Endogenous retrovirus group K member 25 Pro protein (ERVK-25) from Homo sapiens (Human).